The sequence spans 649 residues: Threonine--tRNA ligase (649 aa).

In terms of domain architecture, TGS spans 1–66 (MVQITLPDGS…DNDAQLAIVT (66 aa)). The tract at residues 247-538 (DHRKIGRELD…LIENHAGAMP (292 aa)) is catalytic. Zn(2+) contacts are provided by cysteine 338, histidine 389, and histidine 515.

It belongs to the class-II aminoacyl-tRNA synthetase family. As to quaternary structure, homodimer. Zn(2+) serves as cofactor.

The protein resides in the cytoplasm. The catalysed reaction is tRNA(Thr) + L-threonine + ATP = L-threonyl-tRNA(Thr) + AMP + diphosphate + H(+). Functionally, catalyzes the attachment of threonine to tRNA(Thr) in a two-step reaction: L-threonine is first activated by ATP to form Thr-AMP and then transferred to the acceptor end of tRNA(Thr). Also edits incorrectly charged L-seryl-tRNA(Thr). The polypeptide is Threonine--tRNA ligase (Bordetella bronchiseptica (strain ATCC BAA-588 / NCTC 13252 / RB50) (Alcaligenes bronchisepticus)).